The primary structure comprises 230 residues: Ribosomal RNA small subunit methyltransferase G (230 aa).

Residues G95, F100, 146–147 (GE), and R159 contribute to the S-adenosyl-L-methionine site.

Belongs to the methyltransferase superfamily. RNA methyltransferase RsmG family.

The protein resides in the cytoplasm. Its function is as follows. Specifically methylates the N7 position of a guanine in 16S rRNA. In Parabacteroides distasonis (strain ATCC 8503 / DSM 20701 / CIP 104284 / JCM 5825 / NCTC 11152), this protein is Ribosomal RNA small subunit methyltransferase G.